Consider the following 493-residue polypeptide: Alpha-amylase-related protein (493 aa).

An N-terminal signal peptide occupies residues 1–19; sequence MFKFALALTLCLAGSLSLA. Pyrrolidone carboxylic acid is present on Gln20. Residues Cys47 and Cys103 are joined by a disulfide bond. Ca(2+) is bound by residues Asn117, Gln168, and Asp177. Cys156 and Cys170 are disulfide-bonded. Arg205 lines the chloride pocket. The active-site Nucleophile is Asp207. His211 is a Ca(2+) binding site. Catalysis depends on Glu244, which acts as the Proton donor. Chloride-binding residues include Asn307 and Arg342. Disulfide bonds link Cys375/Cys381, Cys417/Cys440, and Cys447/Cys459.

It belongs to the glycosyl hydrolase 13 family. In terms of assembly, monomer. Ca(2+) serves as cofactor. Requires chloride as cofactor.

Its subcellular location is the secreted. The catalysed reaction is Endohydrolysis of (1-&gt;4)-alpha-D-glucosidic linkages in polysaccharides containing three or more (1-&gt;4)-alpha-linked D-glucose units.. This chain is Alpha-amylase-related protein (Amyrel), found in Drosophila elegans (Fruit fly).